A 1257-amino-acid polypeptide reads, in one-letter code: MASVCGAPSPGGALGSQAPAWYHRDLSRAAAEELLARAGRDGSFLVRDSESVAGAFALCVLYQKHVHTYRILPDGEDFLAVQTSQGVPVRRFQTLGELIGLYAQPNQGLVCALLLPVEGEREPDPPDDRDASDVEDEKPPLPPRSGSTSISVPAGPSSPLPAPETPTTPAAESTPNGLSTVSHEYLKGSYGLDLEAVRGGASNLPHLTRTLVTSCRRLHSEVDKVLSGLEILSKVFDQQSSPMVTRLLQQQSLPQTGEQELESLVLKLSVLKDFLSGIQKKALKALQDMSSTAPPAPLQPSIRKAKTIPVQAFEVKLDVTLGDLTKIGKSQKFTLSVDVEGGRLVLLRRQRDSQEDWTTFTHDRIRQLIKSQRVQNKLGVVFEKEKDRTQRKDFIFVSARKREAFCQLLQLMKNKHSKQDEPDMISVFIGTWNMGSVPPPKNVTSWFTSKGLGKALDEVTVTIPHDIYVFGTQENSVGDREWLDLLRGGLKELTDLDYRPIAMQSLWNIKVAVLVKPEHENRISHVSTSSVKTGIANTLGNKGAVGVSFMFNGTSFGFVNCHLTSGNEKTTRRNQNYLDILRLLSLGDRQLSAFDISLRFTHLFWFGDLNYRLDMDIQEILNYISRREFEPLLRVDQLNLEREKHKVFLRFSEEEISFPPTYRYERGSRDTYAWHKQKPTGVRTNVPSWCDRILWKSYPETHIICNSYGCTDDIVTSDHSPVFGTFEVGVTSQFISKKGLSKTSDQAYIEFESIEAIVKTASRTKFFIEFYSTCLEEYKKSFENDAQSSDNINFLKVQWSSRQLPTLKPILADIEYLQDQHLLLTVKSMDGYESYGECVVALKSMIGSTAQQFLTFLSHRGEETGNIRGSMKVRVPTERLGTRERLYEWISIDKDDTGAKSKAPSVLRGSQEHRSGSRKPTSTEASCPLSKLFEEPEKPPPTGRPPAPPRAVPREESLNPRLKSEGTPEQEGVAAPPPKNSFNNPAYYVLEGVPHQLLPLEPTSFARAPIPPTTKNKVAITVPAPQLGRHRTPRVGEGSSSDEDSGGTLPPPDFPPPPLPDSAIFLPPNLDPLSMPVVRGRSVGEARGPPPPKAHPRPPLPPGTSPASTFLEEVASADDRSCSVLQMAKTLSEVDYSPGPGRSALLPNPLELQLPRGPSDYGRPLSFPPPRIRESIQEDLAEEAPCPQGGRASGLGEAGMGAWLRAIGLERYEEGLVHNGWDDLEFLSDITEEDLEEAGVQDPAHKRLLLDTLQLSK.

Residues 21–117 enclose the SH2 domain; the sequence is WYHRDLSRAA…GLVCALLLPV (97 aa). The segment covering 119-132 has biased composition (basic and acidic residues); the sequence is GEREPDPPDDRDAS. The segment at 119-181 is disordered; sequence GEREPDPPDD…ESTPNGLSTV (63 aa). The residue at position 132 (S132) is a Phosphoserine. Residues 156 to 166 are compositionally biased toward pro residues; the sequence is PSSPLPAPETP. T165 is modified (phosphothreonine). S241 and S353 each carry phosphoserine. Y887 carries the phosphotyrosine modification. S891 is subject to Phosphoserine. The tract at residues 897 to 986 is disordered; sequence TGAKSKAPSV…PPKNSFNNPA (90 aa). The segment covering 939 to 951 has biased composition (pro residues); sequence PPPTGRPPAPPRA. The SH3-binding signature appears at 945–950; it reads PPAPPR. Basic and acidic residues predominate over residues 952–966; the sequence is VPREESLNPRLKSEG. Positions 984-987 match the NPXY motif motif; it reads NPAY. Y987 is modified (phosphotyrosine). The interval 1004–1115 is disordered; sequence SFARAPIPPT…PASTFLEEVA (112 aa). 2 stretches are compositionally biased toward pro residues: residues 1049 to 1060 and 1088 to 1104; these read LPPPDFPPPPLP and GPPP…PPGT. S1132 bears the Phosphoserine mark. Residues Y1136 and Y1161 each carry the phosphotyrosine modification. The region spanning 1195–1257 is the SAM domain; that stretch reads LGEAGMGAWL…LLLDTLQLSK (63 aa). The residue at position 1256 (S1256) is a Phosphoserine.

The protein belongs to the inositol 1,4,5-trisphosphate 5-phosphatase family. In terms of assembly, interacts with tyrosine phosphorylated form of SHC1. Interacts with EGFR. Upon stimulation by the EGF signaling pathway, it forms a complex with SHC1 and EGFR. Interacts with cytoskeletal protein SORBS3/vinexin, promoting its localization to the periphery of cells. Forms a complex with filamin (FLNA or FLNB), actin, GPIb (GP1BA or GP1BB) that regulates cortical and submembraneous actin. Interacts with c-Met/MET, when c-Met/MET is phosphorylated on 'Tyr-1356'. Interacts with p130Cas/BCAR1. Interacts with CENTD3/ARAP3 via its SAM domain. Interacts with c-Cbl/CBL and CAP/SORBS1. Interacts with activated EPHA2 receptor. Interacts with receptors FCGR2A. Interacts with FCGR2B. Interacts with tyrosine kinase ABL1. Interacts with tyrosine kinase TEC. Interacts with CSF1R. Interacts (via N-terminus) with SH3YL1 (via SH3 domain). Interacts (via SH2 domain) with tyrosine phosphorylated KLRC1 (via ITIM). Interacts with NEDD9/HEF1. Post-translationally, tyrosine phosphorylated by the members of the SRC family after exposure to a diverse array of extracellular stimuli such as insulin, growth factors such as EGF or PDGF, chemokines, integrin ligands and hypertonic and oxidative stress. May be phosphorylated upon IgG receptor FCGR2B-binding. Phosphorylated at Tyr-987 following cell attachment and spreading. Phosphorylated at Tyr-1161 following EGF signaling pathway stimulation.

Its subcellular location is the cytoplasm. The protein resides in the cytosol. It is found in the cytoskeleton. It localises to the membrane. The protein localises to the cell projection. Its subcellular location is the filopodium. The protein resides in the lamellipodium. It is found in the basal cell membrane. It localises to the nucleus. The protein localises to the nucleus speckle. Its subcellular location is the spindle pole. The enzyme catalyses a 1,2-diacyl-sn-glycero-3-phospho-(1D-myo-inositol-3,4,5-trisphosphate) + H2O = a 1,2-diacyl-sn-glycero-3-phospho-(1D-myo-inositol-3,4-bisphosphate) + phosphate. The catalysed reaction is 1,2-dioctanoyl-sn-glycero-3-phospho-(1D-myo-inositol-3,4,5-trisphosphate) + H2O = 1,2-dioctanoyl-sn-glycero-3-phospho-(1D-myo-inositol-3,4-bisphosphate) + phosphate. It catalyses the reaction 1,2-dihexadecanoyl-sn-glycero-3-phospho-(1D-myo-inositol-3,4,5-trisphosphate) + H2O = 1,2-dihexadecanoyl-sn-glycero-3-phospho-(1D-myo-inositol-3,4-bisphosphate) + phosphate. Its activity is regulated as follows. Activated upon translocation to the sites of synthesis of PtdIns(3,4,5)P3 in the membrane. Enzymatic activity is enhanced in the presence of phosphatidylserine. Its function is as follows. Phosphatidylinositol (PtdIns) phosphatase that specifically hydrolyzes the 5-phosphate of phosphatidylinositol-3,4,5-trisphosphate (PtdIns(3,4,5)P3) to produce PtdIns(3,4)P2, thereby negatively regulating the PI3K (phosphoinositide 3-kinase) pathways. Required for correct mitotic spindle orientation and therefore progression of mitosis. Plays a central role in regulation of PI3K-dependent insulin signaling, although the precise molecular mechanisms and signaling pathways remain unclear. While overexpression reduces both insulin-stimulated MAP kinase and Akt activation, its absence does not affect insulin signaling or GLUT4 trafficking. Confers resistance to dietary obesity. May act by regulating AKT2, but not AKT1, phosphorylation at the plasma membrane. Part of a signaling pathway that regulates actin cytoskeleton remodeling. Required for the maintenance and dynamic remodeling of actin structures as well as in endocytosis, having a major impact on ligand-induced EGFR internalization and degradation. Participates in regulation of cortical and submembraneous actin by hydrolyzing PtdIns(3,4,5)P3 thereby regulating membrane ruffling. Regulates cell adhesion and cell spreading. Required for HGF-mediated lamellipodium formation, cell scattering and spreading. Acts as a negative regulator of EPHA2 receptor endocytosis by inhibiting via PI3K-dependent Rac1 activation. Acts as a regulator of neuritogenesis by regulating PtdIns(3,4,5)P3 level and is required to form an initial protrusive pattern, and later, maintain proper neurite outgrowth. Acts as a negative regulator of the FC-gamma-RIIA receptor (FCGR2A). Mediates signaling from the FC-gamma-RIIB receptor (FCGR2B), playing a central role in terminating signal transduction from activating immune/hematopoietic cell receptor systems. Involved in EGF signaling pathway. Upon stimulation by EGF, it is recruited by EGFR and dephosphorylates PtdIns(3,4,5)P3. Plays a negative role in regulating the PI3K-PKB pathway, possibly by inhibiting PKB activity. Down-regulates Fc-gamma-R-mediated phagocytosis in macrophages independently of INPP5D/SHIP1. In macrophages, down-regulates NF-kappa-B-dependent gene transcription by regulating macrophage colony-stimulating factor (M-CSF)-induced signaling. Plays a role in the localization of AURKA and NEDD9/HEF1 to the basolateral membrane at interphase in polarized cysts, thereby mediates cell cycle homeostasis, cell polarization and cilia assembly. Additionally promotion of cilia growth is also facilitated by hydrolysis of (PtdIns(3,4,5)P3) to PtdIns(3,4)P2. Promotes formation of apical membrane-initiation sites during the initial stages of lumen formation via Rho family-induced actin filament organization and CTNNB1 localization to cell-cell contacts. May also hydrolyze PtdIns(1,3,4,5)P4, and could thus affect the levels of the higher inositol polyphosphates like InsP6. Involved in endochondral ossification. The chain is Phosphatidylinositol 3,4,5-trisphosphate 5-phosphatase 2 from Rattus norvegicus (Rat).